A 537-amino-acid polypeptide reads, in one-letter code: Senescence-associated carboxylesterase 101 (537 aa).

Positions 1–27 (MESSSSLKGSALGKLVVTSGLLHSSWS) are cleaved as a signal peptide. A helical transmembrane segment spans residues 140–160 (VIITGAALGGSVASLYTLWLL).

Part of a nuclear complex made of EDS1, PAD4 and SAG101, that can be redirected to the cytoplasm in the presence of an extranuclear form of EDS1. Interacts directly with EDS1. As to expression, expressed in senescing leaves.

The protein localises to the membrane. It is found in the nucleus. The protein resides in the cytoplasm. The catalysed reaction is a carboxylic ester + H2O = an alcohol + a carboxylate + H(+). Its function is as follows. Acyl hydrolase that triggers the leaf senescence onset. Can use triolein as substrate to produce oleic acids. Functionally, involved in the EDS1-dependent intrinsic and indispensable resistance signaling pathway; together with PAD4, required for programmed cell death triggered by RPS4 in response to avirulent pathogens (e.g. P.syringae pv. tomato strain DC3000 and H.parasitica isolates CALA2 and EMWA1) and in restricting the growth of virulent pathogens (e.g. H.parasitica isolates NOCO2 and P.syringae pv. tomato strain DC3000 avrRps4). Contributes in reinforcing the immune response around hypersensitive response foci. Regulates the nuclear localization of EDS1. Essential for the RPP8/HRT-mediated resistance to the turnip crinkle virus (TCV). Involved in the post-invasion resistance to P.pachyrhizi in the mesophyll. In Arabidopsis thaliana (Mouse-ear cress), this protein is Senescence-associated carboxylesterase 101 (SAG101).